The sequence spans 292 residues: uncharacterized protein (292 aa).

Residues 175–197 (VLNFYFTALPYAIDGIISGIGVF) form a helical membrane-spanning segment.

It is found in the membrane. This is an uncharacterized protein from Methanocaldococcus jannaschii (strain ATCC 43067 / DSM 2661 / JAL-1 / JCM 10045 / NBRC 100440) (Methanococcus jannaschii).